Consider the following 231-residue polypeptide: Ion-translocating oxidoreductase complex subunit E (231 aa).

6 helical membrane-spanning segments follow: residues 18-38 (ALVQLLGLCPLLAVTSTATNA), 39-59 (LGLGLATTLVLTLTNLTISTL), 63-83 (TPSEIRIPIYVMIIASVVSAV), 86-106 (LINAYAFGLYQSLGIFIPLIV), 125-145 (ALSALDGFSIGMGATCAMFVL), and 182-202 (PFLLAMLPPGAFIGLGLMLAG).

This sequence belongs to the NqrDE/RnfAE family. The complex is composed of six subunits: RsxA, RsxB, RsxC, RsxD, RsxE and RsxG.

It is found in the cell inner membrane. Functionally, part of a membrane-bound complex that couples electron transfer with translocation of ions across the membrane. Required to maintain the reduced state of SoxR. This is Ion-translocating oxidoreductase complex subunit E from Escherichia coli O6:K15:H31 (strain 536 / UPEC).